The chain runs to 200 residues: Putative NAD(P)H nitroreductase Spy0809 (200 aa).

Requires FMN as cofactor.

The protein is Putative NAD(P)H nitroreductase Spy0809 of Streptococcus pyogenes serotype M6 (strain ATCC BAA-946 / MGAS10394).